The sequence spans 200 residues: NAD(P)H dehydrogenase (quinone) (200 aa).

The 188-residue stretch at 4-191 (VLVLYYSSYG…DIARYQGKHV (188 aa)) folds into the Flavodoxin-like domain. FMN is bound by residues 10 to 15 (SSYGHV) and 79 to 81 (TRF). Tyr12 lines the NAD(+) pocket. Substrate is bound at residue Trp99. Residues 114 to 120 (STGTQHG) and His135 each bind FMN.

It belongs to the WrbA family. It depends on FMN as a cofactor.

It catalyses the reaction a quinone + NADH + H(+) = a quinol + NAD(+). The catalysed reaction is a quinone + NADPH + H(+) = a quinol + NADP(+). This Burkholderia multivorans (strain ATCC 17616 / 249) protein is NAD(P)H dehydrogenase (quinone).